The following is a 140-amino-acid chain: ATP synthase epsilon chain (140 aa).

Belongs to the ATPase epsilon chain family. F-type ATPases have 2 components, CF(1) - the catalytic core - and CF(0) - the membrane proton channel. CF(1) has five subunits: alpha(3), beta(3), gamma(1), delta(1), epsilon(1). CF(0) has three main subunits: a, b and c.

It localises to the cell inner membrane. In terms of biological role, produces ATP from ADP in the presence of a proton gradient across the membrane. The chain is ATP synthase epsilon chain from Chromobacterium violaceum (strain ATCC 12472 / DSM 30191 / JCM 1249 / CCUG 213 / NBRC 12614 / NCIMB 9131 / NCTC 9757 / MK).